A 200-amino-acid chain; its full sequence is Small ribosomal subunit protein uS4 (200 aa).

Residues 22–42 (TGKELQKRPYPPGQHGPGQRR) form a disordered region. An S4 RNA-binding domain is found at 92–152 (SRLDNLVYRL…EKSRNLQVIK (61 aa)).

It belongs to the universal ribosomal protein uS4 family. Part of the 30S ribosomal subunit. Contacts protein S5. The interaction surface between S4 and S5 is involved in control of translational fidelity.

Its function is as follows. One of the primary rRNA binding proteins, it binds directly to 16S rRNA where it nucleates assembly of the body of the 30S subunit. Functionally, with S5 and S12 plays an important role in translational accuracy. The sequence is that of Small ribosomal subunit protein uS4 from Geobacillus kaustophilus (strain HTA426).